We begin with the raw amino-acid sequence, 357 residues long: Ubiquitin carboxyl-terminal hydrolase 2 (357 aa).

Residues 19 to 351 form the USP domain; that stretch reads TGLRNLGNTC…DAYLLFYELA (333 aa). Cys28 (nucleophile) is an active-site residue. 4 residues coordinate Zn(2+): Cys177, Cys180, Cys228, and Cys231. Residue His309 is the Proton acceptor of the active site.

This sequence belongs to the peptidase C19 family. USP2 subfamily. As to quaternary structure, homooligomer.

The protein resides in the cytoplasm. It localises to the perinuclear region. It catalyses the reaction Thiol-dependent hydrolysis of ester, thioester, amide, peptide and isopeptide bonds formed by the C-terminal Gly of ubiquitin (a 76-residue protein attached to proteins as an intracellular targeting signal).. Its function is as follows. Hydrolase that deubiquitinates polyubiquitinated target proteins such as MDM2, MDM4 and CCND1. Possesses both ubiquitin-specific peptidase and isopeptidase activities. May play a role in the regulation of the circadian clock. This Gallus gallus (Chicken) protein is Ubiquitin carboxyl-terminal hydrolase 2 (USP2).